We begin with the raw amino-acid sequence, 58 residues long: uncharacterized protein (58 aa).

The span at 23–51 shows a compositional bias: low complexity; it reads TTTSTSTTTTSTTTSTTTSTTTTTTTTTT. The disordered stretch occupies residues 23–58; sequence TTTSTSTTTTSTTTSTTTSTTTTTTTTTTKDFNTET.

This is an uncharacterized protein from Dictyostelium discoideum (Social amoeba).